Reading from the N-terminus, the 192-residue chain is Adenylate kinase (192 aa).

Residue 12 to 17 (GSGKTT) participates in ATP binding. The tract at residues 34-63 (STGDLLRAEVASGSELGKTIDSFISKGNLV) is NMP. Residues Thr-35, Arg-40, 61-63 (NLV), 88-91 (GYPR), and Gln-95 each bind AMP. The tract at residues 130–136 (GRNRGAD) is LID. Arg-131 provides a ligand contact to ATP. AMP-binding residues include Arg-133 and Arg-145. Arg-173 is a binding site for ATP.

It belongs to the adenylate kinase family. In terms of assembly, monomer.

The protein resides in the cytoplasm. It carries out the reaction AMP + ATP = 2 ADP. It participates in purine metabolism; AMP biosynthesis via salvage pathway; AMP from ADP: step 1/1. Catalyzes the reversible transfer of the terminal phosphate group between ATP and AMP. Plays an important role in cellular energy homeostasis and in adenine nucleotide metabolism. The chain is Adenylate kinase from Campylobacter jejuni subsp. jejuni serotype O:2 (strain ATCC 700819 / NCTC 11168).